The chain runs to 124 residues: uncharacterized protein (124 aa).

A helical transmembrane segment spans residues V83 to A100.

Its subcellular location is the membrane. This is an uncharacterized protein from Saccharomyces cerevisiae (strain ATCC 204508 / S288c) (Baker's yeast).